Reading from the N-terminus, the 1310-residue chain is Adhesion G protein-coupled receptor A3 (1310 aa).

The first 27 residues, M1 to A27, serve as a signal peptide directing secretion. In terms of domain architecture, LRRNT spans L28–N70. Topologically, residues L28–L747 are extracellular. 2 N-linked (GlcNAc...) asparagine glycosylation sites follow: N70 and N87. LRR repeat units lie at residues R71 to G92, L95 to G116, S119 to G140, and N143 to Y164. N-linked (GlcNAc...) asparagine glycosylation is found at N148, N195, N290, N321, N422, N442, N581, N641, N676, and N717. The LRRCT domain occupies E176–P226. In terms of domain architecture, Ig-like spans P231–V329. C253 and C313 are joined by a disulfide. A GAIN-B domain is found at L572 to E739. A GPS region spans residues A690 to E739. The cysteines at positions 709 and 723 are disulfide-linked. The helical transmembrane segment at L748 to I768 threads the bilayer. The Cytoplasmic portion of the chain corresponds to S769–H785. The helical transmembrane segment at M786–T806 threads the bilayer. Residues Q807 to Q815 are Extracellular-facing. N-linked (GlcNAc...) asparagine glycosylation is present at N810. The helical transmembrane segment at A816–A836 threads the bilayer. Over R837 to R865 the chain is Cytoplasmic. The helical transmembrane segment at F866–I886 threads the bilayer. The Extracellular segment spans residues K887–A908. A helical membrane pass occupies residues F909 to I929. At Q930–L985 the chain is on the cytoplasmic side. The chain crosses the membrane as a helical span at residues L986 to V1006. Residues S1007–D1013 are Extracellular-facing. Residues L1014–H1034 traverse the membrane as a helical segment. Over H1035–V1310 the chain is Cytoplasmic. 3 disordered regions span residues P1065–E1084, V1187–R1208, and Y1221–E1264. Over residues N1222 to S1239 the composition is skewed to polar residues. Positions T1308–V1310 match the PDZ-binding motif.

The protein belongs to the G-protein coupled receptor 2 family. Adhesion G-protein coupled receptor (ADGR) subfamily. In terms of assembly, interacts (via PDZ-binding motif) with DLG1. In terms of tissue distribution, expressed by spermatogonial progenitor cells located within the outer cell layer of the seminiferous tubule and by multipotent adult spermatogonial-derived stem cells.

It is found in the membrane. Functionally, orphan receptor that may have a role in planar cell polarity pathway. This Mus musculus (Mouse) protein is Adhesion G protein-coupled receptor A3 (Adgra3).